A 301-amino-acid polypeptide reads, in one-letter code: Leucine-rich repeat-containing protein 30 (301 aa).

9 LRR repeats span residues Glu72 to Leu93, Arg95 to Leu116, Cys118 to Cys139, Lys141 to Ser163, Arg164 to Leu185, Glu187 to Leu208, Ser210 to Val231, Ser233 to Leu254, and Met265 to Gly287.

This chain is Leucine-rich repeat-containing protein 30 (LRRC30), found in Homo sapiens (Human).